A 555-amino-acid chain; its full sequence is Formate--tetrahydrofolate ligase (555 aa).

Belongs to the formate--tetrahydrofolate ligase family.

The enzyme catalyses (6S)-5,6,7,8-tetrahydrofolate + formate + ATP = (6R)-10-formyltetrahydrofolate + ADP + phosphate. Its pathway is one-carbon metabolism; tetrahydrofolate interconversion. The protein is Formate--tetrahydrofolate ligase of Porphyromonas gingivalis (strain ATCC BAA-308 / W83).